The sequence spans 464 residues: Glutamate--tRNA ligase 2 (464 aa).

Positions 11 to 21 (PSPTGFLHIGS) match the 'HIGH' region motif. The short motif at 240 to 244 (KLSKR) is the 'KMSKS' region element. An ATP-binding site is contributed by Lys243.

This sequence belongs to the class-I aminoacyl-tRNA synthetase family. Glutamate--tRNA ligase type 1 subfamily. In terms of assembly, monomer.

The protein localises to the cytoplasm. It carries out the reaction tRNA(Glu) + L-glutamate + ATP = L-glutamyl-tRNA(Glu) + AMP + diphosphate. In terms of biological role, catalyzes the attachment of glutamate to tRNA(Glu) in a two-step reaction: glutamate is first activated by ATP to form Glu-AMP and then transferred to the acceptor end of tRNA(Glu). This Rickettsia bellii (strain OSU 85-389) protein is Glutamate--tRNA ligase 2.